The following is a 107-amino-acid chain: Small ribosomal subunit protein uS17 (107 aa).

It belongs to the universal ribosomal protein uS17 family. In terms of assembly, part of the 30S ribosomal subunit.

Its function is as follows. One of the primary rRNA binding proteins, it binds specifically to the 5'-end of 16S ribosomal RNA. In Nitrosopumilus maritimus (strain SCM1), this protein is Small ribosomal subunit protein uS17.